A 920-amino-acid chain; its full sequence is MEVQLGLGRVYPRPPSKTYRGAFQNLFQSVREVIQNPGPRHPEAASAAPPGASLLLLQQQQQQQQQQQQQQQQQQQQQQQETSPRQQQQQQGEDGSPQAHRRGPTGYLVLDEEQQPSQPQSALECHPERGCVPEPGAAVAASKGLPQQLPAPPDEDDSAAPSTLSLLGPTFPGLSSCSADLKDILSEASTMQLLQQQQQEAVSEGSSSGRAREASGAPTSSKDNYLGGTSTISDNAKELCKAVSVSMGLGVEALEHLSPGEQLRGDCMYAPLLGVPPAVRPTPCAPLAECKGSLLDDSAGKSTEDTAEYSPFKGGYTKGLEGESLGCSGSAAAGSSGTLELPSTLSLYKSGALDEAAAYQSRDYYNFPLALAGPPPPPPPPHPHARIKLENPLDYGSAWAAAAAQCRYGDLASLHGAGAAGPGSGSPSAAASSSWHTLFTAEEGQLYGPCGGGGGGGGGGGGGGGGGGGGGGGEAGAVAPYGYTRPPQGLAGQESDFTAPDVWYPGGMVSRVPYPSPTCVKSEMGPWMDSYSGPYGDMRLETARDHVLPIDYYFPPQKTCLICGDEASGCHYGALTCGSCKVFFKRAAEGKQKYLCASRNDCTIDKFRRKNCPSCRLRKCYEAGMTLGARKLKKLGNLKLQEEGEASSTTSPTEETTQKLTVSHIEGYECQPIFLNVLEAIEPGVVCAGHDNNQPDSFAALLSSLNELGERQLVHVVKWAKALPGFRNLHVDDQMAVIQYSWMGLMVFAMGWRSFTNVNSRMLYFAPDLVFNEYRMHKSRMYSQCVRMRHLSQEFGWLQITPQEFLCMKALLLFSIIPVDGLKNQKFFDELRMNYIKELDRIIACKRKNPTSCSRRFYQLTKLLDSVQPIARELHQFTFDLLIKSHMVSVDFPEMMAEIISVQVPKILSGKVKPIYFHTQ.

Residues 1-559 (MEVQLGLGRV…IDYYFPPQKT (559 aa)) form a modulating region. Positions 1–587 (MEVQLGLGRV…GSCKVFFKRA (587 aa)) are interaction with ZNF318. 2 disordered regions span residues 36-167 (NPGP…LSLL) and 195-228 (QQQQ…YLGG). A compositionally biased stretch (low complexity) spans 44-91 (AASAAPPGASLLLLQQQQQQQQQQQQQQQQQQQQQQQETSPRQQQQQQ). Ser83 is subject to Phosphoserine; by CDK9. Ser96 is subject to Phosphoserine. Positions 195-217 (QQQQQEAVSEGSSSGRAREASGA) are enriched in low complexity. A compositionally biased stretch (polar residues) spans 218–228 (PTSSKDNYLGG). Tyr225 is modified (phosphotyrosine; by CSK). Residue Ser258 is modified to Phosphoserine. At Tyr269 the chain carries Phosphotyrosine; by CSK and TNK2. 4 positions are modified to phosphotyrosine; by CSK: Tyr309, Tyr348, Tyr359, and Tyr364. Phosphotyrosine; by CSK and TNK2 is present on Tyr365. Lys388 is covalently cross-linked (Glycyl lysine isopeptide (Lys-Gly) (interchain with G-Cter in SUMO)). Phosphotyrosine; by CSK is present on Tyr395. A Glycyl lysine isopeptide (Lys-Gly) (interchain with G-Cter in SUMO) cross-link involves residue Lys521. Phosphotyrosine; by CSK occurs at positions 535 and 552. Positions 552-919 (YYFPPQKTCL…GKVKPIYFHT (368 aa)) are interaction with LPXN. 2 NR C4-type zinc fingers span residues 560–580 (CLIC…CGSC) and 596–620 (CASR…LRKC). A DNA-binding region (nuclear receptor) is located at residues 560 to 632 (CLICGDEASG…AGMTLGARKL (73 aa)). The interval 572–662 (YGALTCGSCK…TEETTQKLTV (91 aa)) is interaction with HIPK3. The segment at 592–919 (QKYLCASRND…GKVKPIYFHT (328 aa)) is interaction with CCAR1. Residues 625–919 (MTLGARKLKK…GKVKPIYFHT (295 aa)) form an interaction with KAT7 region. Ser651 bears the Phosphoserine; by STK4/MST1 mark. Positions 669–900 (ECQPIFLNVL…DFPEMMAEII (232 aa)) constitute an NR LBD domain. Residues Asn706 and Arg753 each coordinate 17beta-hydroxy-5alpha-androstan-3-one. Glycyl lysine isopeptide (Lys-Gly) (interchain with G-Cter in ubiquitin) cross-links involve residues Lys846 and Lys848. Thr878 contributes to the 17beta-hydroxy-5alpha-androstan-3-one binding site. Tyr916 bears the Phosphotyrosine; by CSK mark.

It belongs to the nuclear hormone receptor family. NR3 subfamily. In terms of assembly, binds DNA as a homodimer. Part of a ternary complex containing AR, EFCAB6/DJBP and PARK7. Interacts with HIPK3 and NR0B2 in the presence of androgen. The ligand binding domain interacts with KAT7/HBO1 in the presence of dihydrotestosterone. Interacts with EFCAB6/DJBP, PQBP1, RANBP9, RBAK, SPDEF, SRA1, TGFB1I1 and RREB1. Interacts with ZMIZ1/ZIMP10 and ZMIZ2/ZMIP7 which both enhance its transactivation activity. Interacts with SLC30A9 and RAD54L2/ARIP4. Interacts with MACROD1 (via macro domain). Interacts via the ligand-binding domain with LXXLL and FXXLF motifs from NCOA1, NCOA2, NCOA3 and MAGEA11. Interacts (via nuclear receptor DNA binding domain and nuclear receptor ligand binding domain) with NCOA4. The AR N-terminal poly-Gln region binds Ran resulting in enhancement of AR-mediated transactivation. Ran-binding decreases as the poly-Gln length increases. Interacts with HIP1 (via coiled coil domain). Interacts (via ligand-binding domain) with TRIM68. Interacts with TNK2. Interacts with USP26. Interacts with RNF6. Interacts (regulated by RNF6 probably through polyubiquitination) with RNF14; regulates AR transcriptional activity. Interacts with PRMT2 and TRIM24. Interacts with RACK1. Interacts with RANBP10; this interaction enhances dihydrotestosterone-induced AR transcriptional activity. Interacts with PRPF6 in a hormone-independent way; this interaction enhances dihydrotestosterone-induced AR transcriptional activity. Interacts with STK4/MST1. Interacts with ZIPK/DAPK3. Interacts with LPXN. Interacts with MAK. Part of a complex containing AR, MAK and NCOA3. Interacts with CRY1. Interacts with CCAR1 and GATA2. Interacts with ZNF318. Interacts with BUD31. Interacts with ARID4A. Interacts with ARID4B. Interacts (via NR LBD domain) with ZBTB7A; the interaction is direct and androgen-dependent. Interacts with NCOR1. Interacts with NCOR2. Interacts with CRY2 in a ligand-dependent manner. In terms of processing, sumoylated on Lys-388 (major) and Lys-521. Ubiquitinated. Deubiquitinated by USP26. 'Lys-6' and 'Lys-27'-linked polyubiquitination by RNF6 modulates AR transcriptional activity and specificity. Phosphorylated in prostate cancer cells in response to several growth factors including EGF. Phosphorylation is induced by c-Src kinase (CSK). Tyr-535 is one of the major phosphorylation sites and an increase in phosphorylation and Src kinase activity is associated with prostate cancer progression. Phosphorylation by TNK2 enhances the DNA-binding and transcriptional activity and may be responsible for androgen-independent progression of prostate cancer. Phosphorylation at Ser-83 by CDK9 regulates AR promoter selectivity and cell growth. Phosphorylation by PAK6 leads to AR-mediated transcription inhibition. Post-translationally, palmitoylated by ZDHHC7 and ZDHHC21. Palmitoylation is required for plasma membrane targeting and for rapid intracellular signaling via ERK and AKT kinases and cAMP generation. In terms of tissue distribution, mainly expressed in heart and skeletal muscle. Expressed in basal and stromal cells of the prostate (at protein level).

It is found in the nucleus. The protein localises to the cytoplasm. Its activity is regulated as follows. AIM-100 (4-amino-5,6-biaryl-furo[2,3-d]pyrimidine) suppresses TNK2-mediated phosphorylation at Tyr-269. Inhibits the binding of the Tyr-269 phosphorylated form to androgen-responsive enhancers (AREs) and its transcriptional activity. In terms of biological role, steroid hormone receptors are ligand-activated transcription factors that regulate eukaryotic gene expression and affect cellular proliferation and differentiation in target tissues. Transcription factor activity is modulated by bound coactivator and corepressor proteins like ZBTB7A that recruits NCOR1 and NCOR2 to the androgen response elements/ARE on target genes, negatively regulating androgen receptor signaling and androgen-induced cell proliferation. Transcription activation is also down-regulated by NR0B2. Activated, but not phosphorylated, by HIPK3 and ZIPK/DAPK3. Functionally, lacks the C-terminal ligand-binding domain and may therefore constitutively activate the transcription of a specific set of genes independently of steroid hormones. This is Androgen receptor (AR) from Homo sapiens (Human).